Here is a 545-residue protein sequence, read N- to C-terminus: Chaperonin GroEL 1 (545 aa).

Residues 29–32 (TLGP), 86–90 (DGTTT), G413, 479–481 (DAA), and D495 contribute to the ATP site. The segment at 525–545 (PEPKENNPAGSGAGMGGDFDY) is disordered. The span at 535–545 (SGAGMGGDFDY) shows a compositional bias: gly residues.

This sequence belongs to the chaperonin (HSP60) family. As to quaternary structure, forms a cylinder of 14 subunits composed of two heptameric rings stacked back-to-back. Interacts with the co-chaperonin GroES.

The protein resides in the cytoplasm. It catalyses the reaction ATP + H2O + a folded polypeptide = ADP + phosphate + an unfolded polypeptide.. Together with its co-chaperonin GroES, plays an essential role in assisting protein folding. The GroEL-GroES system forms a nano-cage that allows encapsulation of the non-native substrate proteins and provides a physical environment optimized to promote and accelerate protein folding. In Thermostichus vulcanus (Synechococcus vulcanus), this protein is Chaperonin GroEL 1.